A 237-amino-acid polypeptide reads, in one-letter code: Ribonuclease PH (237 aa).

Phosphate is bound by residues Arg86 and 124-126; that span reads GTR.

This sequence belongs to the RNase PH family. As to quaternary structure, homohexameric ring arranged as a trimer of dimers.

The enzyme catalyses tRNA(n+1) + phosphate = tRNA(n) + a ribonucleoside 5'-diphosphate. Functionally, phosphorolytic 3'-5' exoribonuclease that plays an important role in tRNA 3'-end maturation. Removes nucleotide residues following the 3'-CCA terminus of tRNAs; can also add nucleotides to the ends of RNA molecules by using nucleoside diphosphates as substrates, but this may not be physiologically important. Probably plays a role in initiation of 16S rRNA degradation (leading to ribosome degradation) during starvation. The chain is Ribonuclease PH from Nitrobacter winogradskyi (strain ATCC 25391 / DSM 10237 / CIP 104748 / NCIMB 11846 / Nb-255).